A 128-amino-acid polypeptide reads, in one-letter code: Fluoride-specific ion channel FluC (128 aa).

4 helical membrane-spanning segments follow: residues 5–25 (IVAI…LALA), 35–55 (LGTL…AVVF), 67–87 (LFVI…SVEV), and 96–116 (FGWA…LTAL). Na(+)-binding residues include G75 and T78.

It belongs to the fluoride channel Fluc/FEX (TC 1.A.43) family.

The protein localises to the cell inner membrane. It catalyses the reaction fluoride(in) = fluoride(out). Na(+) is not transported, but it plays an essential structural role and its presence is essential for fluoride channel function. In terms of biological role, fluoride-specific ion channel. Important for reducing fluoride concentration in the cell, thus reducing its toxicity. The sequence is that of Fluoride-specific ion channel FluC from Burkholderia ambifaria (strain MC40-6).